The sequence spans 150 residues: Large ribosomal subunit protein uL13 (150 aa).

The disordered stretch occupies residues 128-150 (GSDHPHSAQEPKILSLNSESVTK).

This sequence belongs to the universal ribosomal protein uL13 family. Part of the 50S ribosomal subunit.

This protein is one of the early assembly proteins of the 50S ribosomal subunit, although it is not seen to bind rRNA by itself. It is important during the early stages of 50S assembly. The polypeptide is Large ribosomal subunit protein uL13 (Prochlorococcus marinus (strain NATL1A)).